Here is a 283-residue protein sequence, read N- to C-terminus: Polyamine aminopropyltransferase (283 aa).

The region spanning 2–237 (ELWYTDQHTK…GHWLFGFASK (236 aa)) is the PABS domain. Q31 provides a ligand contact to S-methyl-5'-thioadenosine. Spermidine-binding residues include H62 and D86. Residues E106 and 137-138 (EG) each bind S-methyl-5'-thioadenosine. D155 functions as the Proton acceptor in the catalytic mechanism. Position 155–158 (155–158 (DCAD)) interacts with spermidine. P162 is a binding site for S-methyl-5'-thioadenosine.

It belongs to the spermidine/spermine synthase family. As to quaternary structure, homodimer or homotetramer.

Its subcellular location is the cytoplasm. It carries out the reaction S-adenosyl 3-(methylsulfanyl)propylamine + putrescine = S-methyl-5'-thioadenosine + spermidine + H(+). The protein operates within amine and polyamine biosynthesis; spermidine biosynthesis; spermidine from putrescine: step 1/1. Functionally, catalyzes the irreversible transfer of a propylamine group from the amino donor S-adenosylmethioninamine (decarboxy-AdoMet) to putrescine (1,4-diaminobutane) to yield spermidine. The sequence is that of Polyamine aminopropyltransferase from Lachnoclostridium phytofermentans (strain ATCC 700394 / DSM 18823 / ISDg) (Clostridium phytofermentans).